The following is a 373-amino-acid chain: Alanine dehydrogenase (373 aa).

Residues Arg15 and Lys75 each contribute to the substrate site. The Proton donor/acceptor role is filled by His96. NAD(+) is bound by residues Ser134, 178-179 (IV), Asp198, Ser220, 239-240 (VL), 267-270 (VAID), Arg280, and 299-302 (VANI). Asp270 serves as the catalytic Proton donor/acceptor.

Belongs to the AlaDH/PNT family. Homohexamer. Trimer of dimer.

It localises to the cytoplasm. It carries out the reaction L-alanine + NAD(+) + H2O = pyruvate + NH4(+) + NADH + H(+). It participates in amino-acid degradation; L-alanine degradation via dehydrogenase pathway; NH(3) and pyruvate from L-alanine: step 1/1. Its function is as follows. Catalyzes the reversible reductive amination of pyruvate to L-alanine. This enzyme is a key factor in the assimilation of L-alanine as an energy source through the tricarboxylic acid cycle. In Methanococcus maripaludis (strain DSM 14266 / JCM 13030 / NBRC 101832 / S2 / LL), this protein is Alanine dehydrogenase.